The following is a 263-amino-acid chain: MKLKSFGVFGNPIKHSKSPLIHNACFLTFQKELRFLGHYHPILLPLESHIKSEFLHLGLSGANVTLPFKERAFQVCDKIKGIALECGAVNTLVLENDELVGYNTDALGFYLSLKQKNYQNALILGAGGSAKALACELKKQGLQVSVLNRSSRGLDFFQRLGCDCFMEPPKSAFDLIINATSASLHNELPLNKEVLKGYFKEGKLAYDLAYGFLTPFLSLAKELKTPFQDGKDMLIYQAALSFEKFSASQIPYSKAFEVMRSVF.

Shikimate contacts are provided by residues S16–S18 and T65. The Proton acceptor role is filled by K69. Residues N90 and D105 each contribute to the shikimate site. NADP(+) is bound by residues G125–S129, S181, and L208. Shikimate is bound at residue Y210. G230 is a binding site for NADP(+). Q237 provides a ligand contact to shikimate.

This sequence belongs to the shikimate dehydrogenase family. As to quaternary structure, homodimer.

It catalyses the reaction shikimate + NADP(+) = 3-dehydroshikimate + NADPH + H(+). It participates in metabolic intermediate biosynthesis; chorismate biosynthesis; chorismate from D-erythrose 4-phosphate and phosphoenolpyruvate: step 4/7. Its function is as follows. Involved in the biosynthesis of the chorismate, which leads to the biosynthesis of aromatic amino acids. Catalyzes the reversible NADPH linked reduction of 3-dehydroshikimate (DHSA) to yield shikimate (SA). The chain is Shikimate dehydrogenase (NADP(+)) from Helicobacter pylori (strain ATCC 700392 / 26695) (Campylobacter pylori).